The chain runs to 142 residues: Galactose-6-phosphate isomerase subunit LacA (142 aa).

The protein belongs to the LacAB/RpiB family. As to quaternary structure, heteromultimeric protein consisting of LacA and LacB.

The enzyme catalyses aldehydo-D-galactose 6-phosphate = keto-D-tagatose 6-phosphate. Its pathway is carbohydrate metabolism; D-galactose 6-phosphate degradation; D-tagatose 6-phosphate from D-galactose 6-phosphate: step 1/1. The sequence is that of Galactose-6-phosphate isomerase subunit LacA from Staphylococcus aureus (strain JH9).